We begin with the raw amino-acid sequence, 430 residues long: Adenylosuccinate synthetase (430 aa).

GTP contacts are provided by residues 12–18 and 40–42; these read GDEGKGK and GHT. The active-site Proton acceptor is aspartate 13. Mg(2+) contacts are provided by aspartate 13 and glycine 40. IMP contacts are provided by residues 13 to 16, 38 to 41, threonine 128, arginine 142, glutamine 223, threonine 238, and arginine 302; these read DEGK and NAGH. Residue histidine 41 is the Proton donor of the active site. A substrate-binding site is contributed by 298–304; it reads TTTGRPR. GTP contacts are provided by residues arginine 304, 330–332, and 412–414; these read SID and SVG.

The protein belongs to the adenylosuccinate synthetase family. As to quaternary structure, homodimer. The cofactor is Mg(2+).

It localises to the cytoplasm. It catalyses the reaction IMP + L-aspartate + GTP = N(6)-(1,2-dicarboxyethyl)-AMP + GDP + phosphate + 2 H(+). It functions in the pathway purine metabolism; AMP biosynthesis via de novo pathway; AMP from IMP: step 1/2. Functionally, plays an important role in the de novo pathway of purine nucleotide biosynthesis. Catalyzes the first committed step in the biosynthesis of AMP from IMP. The sequence is that of Adenylosuccinate synthetase from Streptococcus pyogenes serotype M6 (strain ATCC BAA-946 / MGAS10394).